A 541-amino-acid chain; its full sequence is Chaperonin GroEL (541 aa).

ATP contacts are provided by residues 29–32 (TLGP), 86–90 (DGTTT), G413, 476–478 (NAA), and D492.

The protein belongs to the chaperonin (HSP60) family. In terms of assembly, forms a cylinder of 14 subunits composed of two heptameric rings stacked back-to-back. Interacts with the co-chaperonin GroES.

It localises to the cytoplasm. The catalysed reaction is ATP + H2O + a folded polypeptide = ADP + phosphate + an unfolded polypeptide.. Together with its co-chaperonin GroES, plays an essential role in assisting protein folding. The GroEL-GroES system forms a nano-cage that allows encapsulation of the non-native substrate proteins and provides a physical environment optimized to promote and accelerate protein folding. The chain is Chaperonin GroEL from Streptococcus equi subsp. equi (strain 4047).